The primary structure comprises 254 residues: Cell division protein DivIB (254 aa).

The Cytoplasmic segment spans residues 1 to 21; the sequence is MPNAQIPVLKKNRTKKRTSRK. A helical transmembrane segment spans residues 22–42; it reads IAILLILLFIVLLAVLFFRSS. Residues 43–254 are Extracellular-facing; the sequence is LSRVSEIRFD…EEGQEKDTTQ (212 aa). Residues 44 to 112 enclose the POTRA domain; the sequence is SRVSEIRFDG…GIIAIHIKEF (69 aa).

It belongs to the FtsQ/DivIB family. DivIB subfamily.

Its subcellular location is the cell membrane. Its function is as follows. Cell division protein that may be involved in stabilizing or promoting the assembly of the division complex. The protein is Cell division protein DivIB of Paenibacillus polymyxa (strain E681).